Consider the following 469-residue polypeptide: CBL-interacting serine/threonine-protein kinase 16 (469 aa).

Residues 15 to 278 (YNIGRLLGTG…MSEIKMIPWF (264 aa)) enclose the Protein kinase domain. ATP is bound by residues 21-29 (LGTGNFAKV) and Lys-44. Catalysis depends on Asp-139, which acts as the Proton acceptor. The activation loop stretch occupies residues 157–193 (DFGLSALMMPEGLGGRRGSSDDLLHTRCGTPAYVAPE). Ser-161 is subject to Phosphoserine. Thr-182 is modified (phosphothreonine). The interval 290-320 (IDETIPSPPEPPTKKKKKDLNEKEDDGASPR) is disordered. Residues 317–342 (ASPRSFNAFQFITSMSSGFDLSNLFE) form the NAF domain. The interval 346–376 (KPKRMFTSKFPAKSVKERLETAAREMDMRVK) is PPI. Positions 447–469 (DDEDDVTTNDNVDTNDNKINNVS) are disordered. Positions 454-469 (TNDNVDTNDNKINNVS) are enriched in low complexity.

It belongs to the protein kinase superfamily. CAMK Ser/Thr protein kinase family. SNF1 subfamily. Part of a K(+)-channel calcium-sensing kinase/phosphatase complex composed by a calcium sensor CBL (CBL1, CBL2, CBL3 or CBL9), a kinase CIPK (CIPK6, CIPK16 or CIPK23), a phosphatase PP2C (AIP1) and a K(+)-channel (AKT1). Interacts with AKT1, CBL1, CBL2, CBL3 and CBL9. Mn(2+) serves as cofactor.

It catalyses the reaction L-seryl-[protein] + ATP = O-phospho-L-seryl-[protein] + ADP + H(+). The catalysed reaction is L-threonyl-[protein] + ATP = O-phospho-L-threonyl-[protein] + ADP + H(+). In terms of biological role, CIPK serine-threonine protein kinases interact with CBL proteins. Binding of a CBL protein to the regulatory NAF domain of CIPK protein lead to the activation of the kinase in a calcium-dependent manner. Downstream of CBL1, CBL2, CBL3 and CBL9, regulates by phosphorylation the K(+) conductance and uptake of AKT1. In Arabidopsis thaliana (Mouse-ear cress), this protein is CBL-interacting serine/threonine-protein kinase 16 (CIPK16).